A 154-amino-acid chain; its full sequence is Putative glutamine amidotransferase-like protein RP712 (154 aa).

The 94-residue stretch at Met1–Lys94 folds into the Glutamine amidotransferase type-1 domain.

The protein is Putative glutamine amidotransferase-like protein RP712 of Rickettsia prowazekii (strain Madrid E).